A 283-amino-acid polypeptide reads, in one-letter code: Stage II sporulation protein Q (283 aa).

Residues 22–42 (WVFPAIYLVSAAVILTAVLWY) form a helical membrane-spanning segment. Residues 228-283 (EKAATQETEESIQQSSEKKDGSTEKGTEEKSGEKKDDSTDKSGSKESSTTEDTEQS) form a disordered region. Positions 243–271 (SEKKDGSTEKGTEEKSGEKKDDSTDKSGS) are enriched in basic and acidic residues.

As to quaternary structure, interacts with SpoIIIAH and SpoIIE.

Its subcellular location is the forespore membrane. In terms of biological role, involved in forespore engulfment and required for anchoring membrane proteins on the forespore side of the septal membrane. Forms a channel with SpoIIIAH that is open on the forespore end and closed (or gated) on the mother cell end. This allows sigma-E-directed gene expression in the mother-cell compartment of the sporangium to trigger the activation of sigma-G forespore-specific gene expression by a pathway of intercellular signaling. This chain is Stage II sporulation protein Q (spoIIQ), found in Bacillus subtilis (strain 168).